Reading from the N-terminus, the 269-residue chain is MTSHDPKAVTRRTKVAPTKRMSRFLKHFTVVGDDYHTWNVNYKKWENEEEEEEPAPTSAEGEGNAEGPDAEAGSASTPRQSLDFRSRLRKLFSSHRFQVIIICLVVLDALLVLAELLLDLKIIEPDEQDYAVTAFHYMSFAILVFFMLEIFFKIFVFRLEFFHHKFEILDAFVVVVSFVLDLVLLFKSHHFEALGLLILLRLWRVARIINGIIISVKTRSERQILRLKQINIQLATKIQHLEFSCSEKEQEIERLNKLLKQNGLLGDVN.

Topologically, residues 1–96 (MTSHDPKAVT…RLRKLFSSHR (96 aa)) are cytoplasmic. Position 29 is a phosphothreonine (Thr29). Positions 46-79 (ENEEEEEEPAPTSAEGEGNAEGPDAEAGSASTPR) are disordered. Ser93 carries the phosphoserine modification. The chain crosses the membrane as a helical span at residues 97 to 117 (FQVIIICLVVLDALLVLAELL). Topologically, residues 118-134 (LDLKIIEPDEQDYAVTA) are extracellular. Residues 135-157 (FHYMSFAILVFFMLEIFFKIFVF) form a helical membrane-spanning segment. Over 158–165 (RLEFFHHK) the chain is Cytoplasmic. A helical transmembrane segment spans residues 166 to 186 (FEILDAFVVVVSFVLDLVLLF). At 187 to 193 (KSHHFEA) the chain is on the extracellular side. Residues 194–214 (LGLLILLRLWRVARIINGIII) form a helical membrane-spanning segment. Over 215-269 (SVKTRSERQILRLKQINIQLATKIQHLEFSCSEKEQEIERLNKLLKQNGLLGDVN) the chain is Cytoplasmic. Positions 221-261 (ERQILRLKQINIQLATKIQHLEFSCSEKEQEIERLNKLLKQ) form a coiled coil.

This sequence belongs to the voltage-gated proton channel (VPC) (TC 1.A.51) family. As to quaternary structure, homodimer; each protomer forms its own proton conduction pathway. In terms of processing, phosphorylated in vitro by PRKCD. Phosphorylation may enhance channel gating. As to expression, enriched in immune tissues, such as bone marrow, macrophages and spleen.

The protein resides in the cell membrane. The protein localises to the apical cell membrane. It is found in the cytoplasmic vesicle. Its subcellular location is the phagosome membrane. It localises to the cell projection. The protein resides in the cilium. The protein localises to the flagellum membrane. The catalysed reaction is H(+)(in) = H(+)(out). With respect to regulation, the dimers display cooperative channel gating. The channel activity is inhibited by zinc ions. Voltage-gated proton-selective channel that conducts outward proton currents in response to intracellular acidification. Lacks a canonical ion-channel pore domain and mediates proton permeability via its voltage sensor domain. Provides for proton efflux that compensates for electron charge generated by NADPH oxidase activity either in the extracellular or phagosomal compartments, thus enabling the production of high levels of bactericidal reactive oxygen species during the respiratory burst. Opens when the pH of airway surface liquid exceeds 7 and contributes to respiratory epithelial acid secretion to maintain pH in the mucosa. The chain is Voltage-gated hydrogen channel 1 from Mus musculus (Mouse).